Reading from the N-terminus, the 258-residue chain is Small ribosomal subunit protein uS2 (258 aa).

The segment at 226-258 (QGVSNEEVAAEQNIDLDEKEKSEETEATEATEE) is disordered.

The protein belongs to the universal ribosomal protein uS2 family.

The sequence is that of Small ribosomal subunit protein uS2 from Staphylococcus aureus (strain COL).